A 241-amino-acid chain; its full sequence is dTTP/UTP pyrophosphatase (241 aa).

Phosphoserine is present on Ser-38. Catalysis depends on Asp-105, which acts as the Proton acceptor.

It belongs to the Maf family. YhdE subfamily. A divalent metal cation is required as a cofactor.

The protein resides in the cytoplasm. The protein localises to the nucleus. It carries out the reaction dTTP + H2O = dTMP + diphosphate + H(+). The catalysed reaction is UTP + H2O = UMP + diphosphate + H(+). In terms of biological role, nucleoside triphosphate pyrophosphatase that hydrolyzes dTTP and UTP. May have a dual role in cell division arrest and in preventing the incorporation of modified nucleotides into cellular nucleic acids. The sequence is that of dTTP/UTP pyrophosphatase from Schizosaccharomyces pombe (strain 972 / ATCC 24843) (Fission yeast).